A 386-amino-acid chain; its full sequence is METTNSRRVSSAQRQILATATVRFIEGLHEPAQDSMMCGDDELQSQERMKKRQRLYNKSKRDLVDLLRVYTCLNSVRMFTFVNFGRRIPLAWPEGYELVINNCRDENEYADEKLGELADLVCCRERLVVLGYVKKRGEIGSEPAYWFLKGDIVVLLGGAGRVYAHTWLLPQQLCRVGDTIDDFLRKGLKRFYYAHQLVSSLQFVVEDTEVDGVCSCRDVLCFRDRHIGRSFALRWPKNETLLFHRRRDSFVFVRCDEARRRLAEMCFFGSFGYKYFADAGRISLYVADDGRIFGFNDNDEDGRPRFVAENFQQFRRIGVIQYYKSYVFRREQPEWALLPTCHLSRMFYQKTWRQADEDLLFVKARNDERQEFPDAGTRSAVHDVVR.

The chain is Protein U3 (U3) from Human herpesvirus 6B (strain Z29) (HHV-6 variant B).